A 202-amino-acid polypeptide reads, in one-letter code: Tetranectin (202 aa).

Positions 1–21 are cleaved as a signal peptide; that stretch reads MELWGPCVLLCLFSLLTQVTA. 3 cysteine pairs are disulfide-bonded: Cys-71-Cys-81, Cys-98-Cys-197, and Cys-173-Cys-189. Positions 77-198 constitute a C-type lectin domain; sequence VHMKCFLAFV…CRDKLPYVCQ (122 aa).

In terms of assembly, homotrimer.

Its subcellular location is the secreted. In terms of biological role, tetranectin binds to plasminogen and to isolated kringle 4. May be involved in the packaging of molecules destined for exocytosis. Plays a role in retinal function. The protein is Tetranectin (CLEC3B) of Bos taurus (Bovine).